Here is a 240-residue protein sequence, read N- to C-terminus: MKNKSVEMLIEGAKEWGIFLEMFHVEHFQKYYALLLEWNQKMNLTAITEESEVVIKHFLDSLSVVKSGKIKEEEKIIDVGTGAGFPCIPLKIVFPKLKATLLDSSKKRITFLEEVINKLGINEIELIHGRAEDIGKDIKYREQFDLSMARAVAPLNILLEYTLPFVKVDGYFIALKGREIEEEIENSQRALKELKGEIEEVKEIKLPYSDIVHHLVIIKKIDNCPTKYPRRANAIQRSPL.

Residues G80, F85, 103 to 105, 131 to 132, and R150 contribute to the S-adenosyl-L-methionine site; these read DSS and AE.

It belongs to the methyltransferase superfamily. RNA methyltransferase RsmG family.

It is found in the cytoplasm. In terms of biological role, specifically methylates the N7 position of a guanine in 16S rRNA. The sequence is that of Ribosomal RNA small subunit methyltransferase G from Thermoanaerobacter pseudethanolicus (strain ATCC 33223 / 39E) (Clostridium thermohydrosulfuricum).